The following is a 968-amino-acid chain: MRRAKSRRGPCEPVLRAPPPICYSPSSPVQILEDPAYFYPDLQLYSGRHEASTLTVEASGGLRGKSVEDPLSSFHSPNFLRTPEVEMRGSEDVASGRVLQRLIQEQLRYGTPTENMNLLAIQHQATGSAGPAHATTNFSSTETLTQEDPQMVYQSARQEPQGQEHQGDNTVMEKQVRSTQPQQNNEELPTYEEAKAQSQFFRGQQQQQQQQQQQQQQQQQQGQGPLSHTYYMAGGTSQKSRTEGRPTVNRANSGQAHKDEALKELKQGHVRSLSERIMQLSLERNGAKQHLPSSGNGKSFKAGGEPSPAQPVCKALDPRGPPPEYPFKTKPMKSPVSKNQDHGLYYNDQHPGVLHEMVKPYPAPQPARTEVAVLRYQPPPEYGVTSRPCQLPFPSTVQQHSPMSSQTSSIGGTLHSVSLPLPLPISLAASQPLPASPNQQLGPDAFAIVERAQQMVEILTEENRVLHQELQGCYDNADKLHKFEKELQSISEAYESLVKSTTKRESLDKAMRTKLEGEIRRLHDFNRDLRDRLETANRQLSSREYDGHEDKAAESHYVSQNKEFLKEKEKLEMELAAVRTASEDHRRHIEILDQALSNAQARVIKLEEELREKQAYVEKVEKLQQALTQLQSACEKRGQMERRLRTWLERELDALRTQQKHGTGPPVSLPECNAPALMELVREKEERILALEADMTKWEQKYLEESTIRHFAMSAAAAATAERDTTISNHSRNGSYGESSLEAHIWPEEEEVVQANRRCQDMEYTIKNLHAKIIEKDAMIKVLQQRSRKDAGKTDSASLRPARSVPSIAAATGTHSRQTSLTSSQLTEEKKEEKTTWKGSIGFLLGKEHQGQASAPLLPTTPASALSLPASTTSASSTHAKTGSKDSSTQTDKSTELFWPSMASLPSRGRLSTAPSNSPILKHPAAKGAVEKQENSPGHGKASEHRGRVSNLLHKPEFPDGEMMEVLI.

Composition is skewed to polar residues over residues 152-164 (VYQSARQEPQGQE) and 177-187 (RSTQPQQNNEE). A disordered region spans residues 152-258 (VYQSARQEPQ…NRANSGQAHK (107 aa)). Residues 203 to 224 (GQQQQQQQQQQQQQQQQQQGQG) show a composition bias toward low complexity. Serine 253, serine 281, and serine 307 each carry phosphoserine. The stretch at 271–291 (RSLSERIMQLSLERNGAKQHL) forms a coiled coil. Positions 285–343 (NGAKQHLPSSGNGKSFKAGGEPSPAQPVCKALDPRGPPPEYPFKTKPMKSPVSKNQDHG) are disordered. 2 coiled-coil regions span residues 449–645 (VERA…RRLR) and 676–705 (ALMELVREKEERILALEADMTKWEQKYLEE). Positions 721–742 (AERDTTISNHSRNGSYGESSLE) are disordered. Residues 726–738 (TISNHSRNGSYGE) are compositionally biased toward polar residues. Serine 731 is modified (phosphoserine). Positions 748–773 (EEEEVVQANRRCQDMEYTIKNLHAKI) form a coiled coil. Residues 785–834 (QRSRKDAGKTDSASLRPARSVPSIAAATGTHSRQTSLTSSQLTEEKKEEK) are disordered. A phosphoserine mark is found at serine 804, serine 816, and serine 840. Residues 853–878 (ASAPLLPTTPASALSLPASTTSASST) show a composition bias toward low complexity. Positions 853–956 (ASAPLLPTTP…GRVSNLLHKP (104 aa)) are disordered. A phosphoserine mark is found at serine 912 and serine 918. The short motif at 965–968 (EVLI) is the PDZ-binding element.

It belongs to the angiomotin family. Polyubiquitinated by NEDD4, leading to proteasomal degradation. As to expression, expressed in exocrine glands, including pancreas, submandibular gland, lacrimal gland, parotid gland and sublingual gland (at protein level).

It is found in the cell junction. Its subcellular location is the tight junction. Functionally, inhibits the Wnt/beta-catenin signaling pathway, probably by recruiting CTNNB1 to recycling endosomes and hence preventing its translocation to the nucleus. This is Angiomotin-like protein 1 (Amotl1) from Mus musculus (Mouse).